The following is a 389-amino-acid chain: Succinate--CoA ligase [ADP-forming] subunit beta (389 aa).

The ATP-grasp domain occupies Arg-9–Lys-236. ATP contacts are provided by residues Lys-45, Gly-52–Gly-54, Ala-94, and Glu-99. Mg(2+) is bound by residues Asn-191 and Asp-205. Substrate contacts are provided by residues Asn-256 and Gly-318–Thr-320.

It belongs to the succinate/malate CoA ligase beta subunit family. As to quaternary structure, heterotetramer of two alpha and two beta subunits. Requires Mg(2+) as cofactor.

The catalysed reaction is succinate + ATP + CoA = succinyl-CoA + ADP + phosphate. It carries out the reaction GTP + succinate + CoA = succinyl-CoA + GDP + phosphate. It functions in the pathway carbohydrate metabolism; tricarboxylic acid cycle; succinate from succinyl-CoA (ligase route): step 1/1. Succinyl-CoA synthetase functions in the citric acid cycle (TCA), coupling the hydrolysis of succinyl-CoA to the synthesis of either ATP or GTP and thus represents the only step of substrate-level phosphorylation in the TCA. The beta subunit provides nucleotide specificity of the enzyme and binds the substrate succinate, while the binding sites for coenzyme A and phosphate are found in the alpha subunit. In Arthrobacter sp. (strain FB24), this protein is Succinate--CoA ligase [ADP-forming] subunit beta.